The following is a 401-amino-acid chain: 8-amino-7-oxononanoate synthase (401 aa).

Arg-24 is a binding site for substrate. 111 to 112 (GF) provides a ligand contact to pyridoxal 5'-phosphate. His-137 lines the substrate pocket. Ser-183, His-211, and Thr-240 together coordinate pyridoxal 5'-phosphate. At Lys-243 the chain carries N6-(pyridoxal phosphate)lysine. Thr-357 serves as a coordination point for substrate.

The protein belongs to the class-II pyridoxal-phosphate-dependent aminotransferase family. BioF subfamily. Homodimer. The cofactor is pyridoxal 5'-phosphate.

It catalyses the reaction 6-carboxyhexanoyl-[ACP] + L-alanine + H(+) = (8S)-8-amino-7-oxononanoate + holo-[ACP] + CO2. Its pathway is cofactor biosynthesis; biotin biosynthesis. In terms of biological role, catalyzes the decarboxylative condensation of pimeloyl-[acyl-carrier protein] and L-alanine to produce 8-amino-7-oxononanoate (AON), [acyl-carrier protein], and carbon dioxide. The protein is 8-amino-7-oxononanoate synthase of Xylella fastidiosa (strain M12).